The primary structure comprises 428 residues: MSAFIVLGAQWGDEGKGKMTDYLAEEANVVVRFQGGNNAGHTVVVGDKEYKLRLIPSGILYEDKLNVIGNGVVVDPKALFEEIEYLEGVGVKISPEKLIVSDRAQLIMPYHKVLDKLKEKARGKNDIGTTGRGIGPCYTDKFERCGIRVCDLLHEDVFIEKLRENVEMKNAYITKVLGGEALNFDEILDEYLGFAKKLRPFVQDTSVKVYDAIKADKTVLFEGAQGMLLDIDYGTYPYVTSSNTTAGGVSSGSGIGPNMITNAVGITKAYTTRVGKGPFPTELLGETGDWIREKGHEYGVNTGRSRRCGWLDLVIIKTAVRVSGLTSLAVTKIDTLAGLEKIKVCVGYKFNDTVIDYFPASLEDLAECEPIYEEFDGWDDSVADVRSYDELPENVKKYLARISEFTGTRISIVGVGPKRDQTMRIDNL.

GTP-binding positions include 12–18 and 40–42; these read GDEGKGK and GHT. Asp-13 functions as the Proton acceptor in the catalytic mechanism. Mg(2+) contacts are provided by Asp-13 and Gly-40. IMP contacts are provided by residues 13–16, 38–41, Thr-130, Arg-144, Gln-225, Thr-240, and Arg-304; these read DEGK and NAGH. Catalysis depends on His-41, which acts as the Proton donor. Residue 300-306 coordinates substrate; the sequence is VNTGRSR. Residues Arg-306, 332 to 334, and 414 to 416 each bind GTP; these read KID and GVG.

Belongs to the adenylosuccinate synthetase family. Homodimer. Requires Mg(2+) as cofactor.

The protein resides in the cytoplasm. The catalysed reaction is IMP + L-aspartate + GTP = N(6)-(1,2-dicarboxyethyl)-AMP + GDP + phosphate + 2 H(+). It functions in the pathway purine metabolism; AMP biosynthesis via de novo pathway; AMP from IMP: step 1/2. Its function is as follows. Plays an important role in the de novo pathway of purine nucleotide biosynthesis. Catalyzes the first committed step in the biosynthesis of AMP from IMP. The sequence is that of Adenylosuccinate synthetase from Clostridium beijerinckii (strain ATCC 51743 / NCIMB 8052) (Clostridium acetobutylicum).